A 240-amino-acid polypeptide reads, in one-letter code: Proteasome subunit alpha (240 aa).

Belongs to the peptidase T1A family. In terms of assembly, the 20S proteasome core is composed of 14 alpha and 14 beta subunits that assemble into four stacked heptameric rings, resulting in a barrel-shaped structure. The two inner rings, each composed of seven catalytic beta subunits, are sandwiched by two outer rings, each composed of seven alpha subunits. The catalytic chamber with the active sites is on the inside of the barrel. Has a gated structure, the ends of the cylinder being occluded by the N-termini of the alpha-subunits. Is capped by the proteasome-associated ATPase, ARC.

It is found in the cytoplasm. It functions in the pathway protein degradation; proteasomal Pup-dependent pathway. The formation of the proteasomal ATPase ARC-20S proteasome complex, likely via the docking of the C-termini of ARC into the intersubunit pockets in the alpha-rings, may trigger opening of the gate for substrate entry. Interconversion between the open-gate and close-gate conformations leads to a dynamic regulation of the 20S proteasome proteolysis activity. In terms of biological role, component of the proteasome core, a large protease complex with broad specificity involved in protein degradation. This is Proteasome subunit alpha from Frankia casuarinae (strain DSM 45818 / CECT 9043 / HFP020203 / CcI3).